Here is a 113-residue protein sequence, read N- to C-terminus: Colicin-E1 immunity protein (113 aa).

Functionally, this protein is able to protect a cell, which harbors the plasmid ColE1 encoding colicin E1, against colicin E1. The polypeptide is Colicin-E1 immunity protein (imm) (Escherichia coli).